Consider the following 397-residue polypeptide: Phosphoglycerate kinase (397 aa).

Substrate-binding positions include 25-27, Arg41, 64-67, Arg118, and Arg151; these read DLN and HLGR. Residues Lys202, Glu324, and 350–353 each bind ATP; that span reads GGDT.

This sequence belongs to the phosphoglycerate kinase family. In terms of assembly, monomer.

The protein resides in the cytoplasm. The enzyme catalyses (2R)-3-phosphoglycerate + ATP = (2R)-3-phospho-glyceroyl phosphate + ADP. It participates in carbohydrate degradation; glycolysis; pyruvate from D-glyceraldehyde 3-phosphate: step 2/5. The chain is Phosphoglycerate kinase from Paracidovorax citrulli (strain AAC00-1) (Acidovorax citrulli).